The following is a 295-amino-acid chain: MSVYRDNMYMKYDRNFENRVARRNGQARNASLAKTLHDSGIAERARSPSGSAIPHAYRVMNGSGANDTSLPLTSNPAYVALTSRISSSKSENNQQLAANETAGAPEGTEETVDISNSISDDHANAKNLPAASVKALVGAGVLSDELSVIAYDMSFEDELIQDKQLIDHSVFDQLLEMDDDDEHEFSKSIVWNYFEQAETTIADLQKALEAKDLKKLSSLGHFLKGSSAVLGLTKMRKVCERIQNYGSLRSRDGVMKLPSEEIALDLISKSLSVVNDFYKDARAYLLDFYEKNSST.

Positions 89–110 (KSENNQQLAANETAGAPEGTEE) are disordered. Low complexity predominate over residues 97–106 (AANETAGAPE). The HPt domain maps to 182–284 (EHEFSKSIVW…NDFYKDARAY (103 aa)). Residue His-221 is modified to Phosphohistidine.

Binds to the msc4 response regulator which is part of a multistep phosphorelay system that transmits oxidative stress signals to the spc1 MAPK cascade. The chain is Multistep phosphorelay regulator 1 (mpr1) from Schizosaccharomyces pombe (strain 972 / ATCC 24843) (Fission yeast).